The following is a 214-amino-acid chain: A-type ATP synthase subunit D (214 aa).

It belongs to the V-ATPase D subunit family. As to quaternary structure, has multiple subunits with at least A(3), B(3), C, D, E, F, H, I and proteolipid K(x).

It is found in the cell membrane. Functionally, component of the A-type ATP synthase that produces ATP from ADP in the presence of a proton gradient across the membrane. The polypeptide is A-type ATP synthase subunit D (Pyrococcus furiosus (strain ATCC 43587 / DSM 3638 / JCM 8422 / Vc1)).